Reading from the N-terminus, the 1262-residue chain is Histone-lysine N-methyltransferase eggless (1262 aa).

A disordered region spans residues 1–194 (MSGQPTAVDC…MEVDQDVEES (194 aa)). Composition is skewed to basic and acidic residues over residues 26–41 (ASRE…KGEN), 50–61 (AAKDVEIEELTH), and 81–99 (APDE…KGEN). Over residues 157–166 (SSISSPTSES) the composition is skewed to low complexity. The segment covering 167 to 179 (FPEKDEKTNKENE) has biased composition (basic and acidic residues). A Phosphoserine modification is found at Ser215. Thr217 carries the post-translational modification Phosphothreonine. Residues 353–420 (EKSDFSKNKL…LEKVQTTADK (68 aa)) adopt a coiled-coil conformation. 2 consecutive Tudor domains span residues 529–602 (RLTI…SEKV) and 629–686 (QCTR…RETQ). Residues 743-764 (SSAATPAGGRTNAGGVSTSNSA) are disordered. The MBD domain maps to 818-884 (LDSYSPLAKP…DNFDFTPDLK (67 aa)). In terms of domain architecture, Pre-SET spans 946–1018 (LCCDCEDDCS…NCLNRVVQFS (73 aa)). Residues Cys948, Cys950, Cys954, Cys960, Cys962, Cys1000, Cys1004, Cys1006, and Cys1010 each coordinate Zn(2+). The SET domain occupies 1021 to 1237 (MKLQVFKTSN…SGTELTWNYN (217 aa)). S-adenosyl-L-methionine contacts are provided by residues 1031–1033 (RGW), Asp1069, and Tyr1071. Over residues 1086-1097 (EGYESEVDHSDP) the composition is skewed to basic and acidic residues. Positions 1086–1148 (EGYESEVDHS…QSSELDSQER (63 aa)) are disordered. Positions 1098 to 1113 (DAEEDNGGPDAEDDDD) are enriched in acidic residues. Residues 1129 to 1141 (RSGSTQNSSTQSS) show a composition bias toward low complexity. Residues Arg1191 and 1194–1195 (NH) each bind S-adenosyl-L-methionine. Cys1197, Cys1250, Cys1252, and Cys1257 together coordinate Zn(2+). Positions 1246 to 1262 (KVLYCQCGAPNCRLRLL) constitute a Post-SET domain.

Belongs to the class V-like SAM-binding methyltransferase superfamily. Histone-lysine methyltransferase family. Suvar3-9 subfamily. As to expression, expressed in ovary (at protein level).

The protein resides in the nucleus. It localises to the chromosome. It catalyses the reaction L-lysyl(9)-[histone H3] + 3 S-adenosyl-L-methionine = N(6),N(6),N(6)-trimethyl-L-lysyl(9)-[histone H3] + 3 S-adenosyl-L-homocysteine + 3 H(+). Functionally, histone methyltransferase that specifically trimethylates 'Lys-10' of histone H3 (H3K9me3) in ovary. H3K9me3 represents a specific tag for epigenetic transcriptional repression by recruiting Su(var)205/HP1 to methylated histones. Plays a central role during oogenesis. This is Histone-lysine N-methyltransferase eggless (egg) from Drosophila melanogaster (Fruit fly).